Consider the following 224-residue polypeptide: Glutathione peroxidase 3 (224 aa).

Residues 1–18 form the signal peptide; it reads MAPGSVLSLAVALATIIG. N38 carries N-linked (GlcNAc...) asparagine glycosylation. Residue C73 is part of the active site.

This sequence belongs to the glutathione peroxidase family.

It localises to the secreted. The protein resides in the extracellular space. It catalyses the reaction 2 glutathione + H2O2 = glutathione disulfide + 2 H2O. This chain is Glutathione peroxidase 3 (gpx-3), found in Caenorhabditis elegans.